The sequence spans 455 residues: Bifunctional protein GlmU (455 aa).

The interval 1–226 (MALNVVILAA…AIEVEGANNR (226 aa)) is pyrophosphorylase. UDP-N-acetyl-alpha-D-glucosamine-binding positions include 8–11 (LAAG), Lys-22, Gln-73, 78–79 (GT), 100–102 (YGD), Gly-137, Glu-151, Asn-166, and Asn-224. Mg(2+) is bound at residue Asp-102. Asn-224 serves as a coordination point for Mg(2+). A linker region spans residues 227 to 247 (VQLAQLERAYQARAAEKLMLE). The interval 248-455 (GANLRDPARL…WARPVKKPKS (208 aa)) is N-acetyltransferase. Arg-330 and Lys-348 together coordinate UDP-N-acetyl-alpha-D-glucosamine. His-360 serves as the catalytic Proton acceptor. Residues Tyr-363 and Asn-374 each coordinate UDP-N-acetyl-alpha-D-glucosamine. Acetyl-CoA-binding positions include Ala-377, 383–384 (NY), Ser-402, Ala-420, and Arg-437.

In the N-terminal section; belongs to the N-acetylglucosamine-1-phosphate uridyltransferase family. This sequence in the C-terminal section; belongs to the transferase hexapeptide repeat family. Homotrimer. It depends on Mg(2+) as a cofactor.

It localises to the cytoplasm. It catalyses the reaction alpha-D-glucosamine 1-phosphate + acetyl-CoA = N-acetyl-alpha-D-glucosamine 1-phosphate + CoA + H(+). The catalysed reaction is N-acetyl-alpha-D-glucosamine 1-phosphate + UTP + H(+) = UDP-N-acetyl-alpha-D-glucosamine + diphosphate. It functions in the pathway nucleotide-sugar biosynthesis; UDP-N-acetyl-alpha-D-glucosamine biosynthesis; N-acetyl-alpha-D-glucosamine 1-phosphate from alpha-D-glucosamine 6-phosphate (route II): step 2/2. It participates in nucleotide-sugar biosynthesis; UDP-N-acetyl-alpha-D-glucosamine biosynthesis; UDP-N-acetyl-alpha-D-glucosamine from N-acetyl-alpha-D-glucosamine 1-phosphate: step 1/1. The protein operates within bacterial outer membrane biogenesis; LPS lipid A biosynthesis. Catalyzes the last two sequential reactions in the de novo biosynthetic pathway for UDP-N-acetylglucosamine (UDP-GlcNAc). The C-terminal domain catalyzes the transfer of acetyl group from acetyl coenzyme A to glucosamine-1-phosphate (GlcN-1-P) to produce N-acetylglucosamine-1-phosphate (GlcNAc-1-P), which is converted into UDP-GlcNAc by the transfer of uridine 5-monophosphate (from uridine 5-triphosphate), a reaction catalyzed by the N-terminal domain. The chain is Bifunctional protein GlmU from Shewanella sediminis (strain HAW-EB3).